A 119-amino-acid polypeptide reads, in one-letter code: Large ribosomal subunit protein bL20 (119 aa).

Belongs to the bacterial ribosomal protein bL20 family.

Its function is as follows. Binds directly to 23S ribosomal RNA and is necessary for the in vitro assembly process of the 50S ribosomal subunit. It is not involved in the protein synthesizing functions of that subunit. The polypeptide is Large ribosomal subunit protein bL20 (Geobacillus kaustophilus (strain HTA426)).